Reading from the N-terminus, the 666-residue chain is MAVRSRPQLAFQTEKENGIGITAFNETAKLYANVVEALDAQRLRIFDSVAGSLKTEYILEKEKVISCIAWEQKPLYASEQITTDISGSGEILVLGTNSGEILIYSEHLGSLTRTYSFGILQKIIGAHVLANDGFAIDITGKVVCFSVNTGEVRTSFTVPSSSREFSGLYLSTVFKNLALASSHNIHIVDLNHRNPIDSLTTHTSMINSVVFQYLKDENKFYFGVSANQDRFINLYSKELDGTGEFPTNTVKNVGALVCENEVKMLSIAYEIENPETGVLAALTNDGTIEMFENPWLSKLRQNGTNASSLSHRRKLLTSHSTLKICFCRSRGDPPIVLESIAFESTDSLTVVWKESTRTVFETVPWRILSSQATNGLIELVRSKTRLTSKNKTVSNVYDESNATISSGVMQKDLRKTEEIGSAEAMEGEEQEPSLAERLQNLTKLDQQAQALSTQISASTSLSTVLTQALKTNDQSLLESCFNNNNVETIDTTIRRLDPSLAPILLDKLAEKLALRPMRADVLMVWIRCTLITHGGHLVLVDDLKHKLANLHSILEDRASKYSSMLALQGKLDLVLSQIAFRKAGGSKDNAEDEEPISIYYEGYEESMDEASSTGDEGYSSDDSVDNEMYSDEENSSKGAFPDEENENRELSEDYSGDESLENSESE.

WD repeat units follow at residues 14 to 56, 60 to 114, 201 to 246, 259 to 301, 316 to 362, 495 to 535, and 570 to 609; these read EKEN…LKTE, EKEK…LTRT, THTS…GEFP, ENEV…KLRQ, LTSH…VFET, RLDP…THGG, and KLDLVLSQIAFRKAGGSKDNAEDEEPISIYYEGYEESMDE. The tract at residues 603–666 is disordered; it reads YEESMDEASS…DESLENSESE (64 aa). Composition is skewed to acidic residues over residues 618-633 and 641-666; these read YSSDDSVDNEMYSDEE and PDEENENRELSEDYSGDESLENSESE.

It belongs to the UTP5 family. As to quaternary structure, component of the ribosomal small subunit (SSU) processome.

It is found in the nucleus. The protein resides in the nucleolus. In terms of biological role, involved in nucleolar processing of pre-18S ribosomal RNA. Required for optimal pre-ribosomal RNA transcription by RNA polymerase I together with a subset of U3 proteins required for transcription (t-UTPs). This Schizosaccharomyces pombe (strain 972 / ATCC 24843) (Fission yeast) protein is U3 small nucleolar RNA-associated protein 5 (utp5).